We begin with the raw amino-acid sequence, 735 residues long: Serine/threonine-protein kinase BRSK2 (735 aa).

The Protein kinase domain maps to 20–271 (YRLEKTLGKG…LEHIQKHIWY (252 aa)). ATP-binding positions include 26–34 (LGKGQTGLV) and Lys-49. Asp-142 functions as the Proton acceptor in the catalytic mechanism. Residue Thr-175 is modified to Phosphothreonine; by LKB1. Thr-261 carries the post-translational modification Phosphothreonine; by PKA. Ser-295 is modified (phosphoserine). The UBA domain maps to 298–340 (DIDPDVLDSMHSLGCFRDRNKLLQDLLSEEENQEKMIYFLLLD). The span at 346 to 367 (PSHEDEDLPPRNEIDPPRKRVD) shows a compositional bias: basic and acidic residues. 3 disordered regions span residues 346 to 476 (PSHE…GVPW), 493 to 514 (FHRR…PESS), and 682 to 735 (KNGQ…REQP). Phosphoserine occurs at positions 368, 383, 394, 413, 417, 424, and 428. The segment covering 411-429 (SRSISGASSGLSTSPLSSP) has biased composition (low complexity). Pro residues predominate over residues 432–446 (TPHPSPRGSPLPTPK). Ser-456 is subject to Phosphoserine. Phosphothreonine occurs at positions 460, 464, and 510. 2 positions are modified to phosphoserine: Ser-513 and Ser-514.

Belongs to the protein kinase superfamily. CAMK Ser/Thr protein kinase family. SNF1 subfamily. Interacts with FZR1, a regulatory subunit of the APC ubiquitin ligase complex. Interacts with COPS5. Interacts with PAK1. Requires Mg(2+) as cofactor. Post-translationally, may be phosphorylated at Thr-261 by PKA. Phosphorylated at Thr-175 by STK11/LKB1 in complex with STE20-related adapter-alpha (STRADA) pseudo kinase and CAB39. Not phosphorylated at Thr-175 by CaMKK2. In contrast, it is phosphorylated and activated by CaMKK1. May be inactivated via dephosphorylation of Thr-175 by PP2C. Polyubiquitinated by the APC complex in conjunction with FZR1, leading to its proteasomal degradation. Targeted for proteasomal degradation by interaction with COPS5. BRSK2 levels change during the cell cycle. BRSK2 levels are low at the G1/S boundary and gradually increase as cells progress into G2 phase. BRSK2 levels decrease rapidly at the end of mitosis.

The protein localises to the cytoplasm. The protein resides in the cytoskeleton. It is found in the microtubule organizing center. Its subcellular location is the centrosome. It localises to the perinuclear region. The protein localises to the endoplasmic reticulum. The enzyme catalyses L-seryl-[protein] + ATP = O-phospho-L-seryl-[protein] + ADP + H(+). The catalysed reaction is L-threonyl-[protein] + ATP = O-phospho-L-threonyl-[protein] + ADP + H(+). It carries out the reaction L-seryl-[tau protein] + ATP = O-phospho-L-seryl-[tau protein] + ADP + H(+). It catalyses the reaction L-threonyl-[tau protein] + ATP = O-phospho-L-threonyl-[tau protein] + ADP + H(+). Its activity is regulated as follows. Activated by phosphorylation on Thr-175 by STK11/LKB1. Serine/threonine-protein kinase that plays a key role in polarization of neurons and axonogenesis, cell cycle progress and insulin secretion. Phosphorylates CDK16, CDC25C, MAPT/TAU, PAK1 and WEE1. Following phosphorylation and activation by STK11/LKB1, acts as a key regulator of polarization of cortical neurons, probably by mediating phosphorylation of microtubule-associated proteins such as MAPT/TAU at 'Thr-523' and 'Ser-573'. Also regulates neuron polarization by mediating phosphorylation of WEE1 at 'Ser-642' in post-mitotic neurons, leading to down-regulate WEE1 activity in polarized neurons. Plays a role in the regulation of the mitotic cell cycle progress and the onset of mitosis. Plays a role in the regulation of insulin secretion in response to elevated glucose levels, probably via phosphorylation of CDK16 and PAK1. While BRSK2 phosphorylated at Thr-175 can inhibit insulin secretion, BRSK2 phosphorylated at Thr-261 can promote insulin secretion. Regulates reorganization of the actin cytoskeleton. May play a role in the apoptotic response triggered by endoplasmic reticulum (ER) stress. The protein is Serine/threonine-protein kinase BRSK2 (Brsk2) of Rattus norvegicus (Rat).